Consider the following 209-residue polypeptide: Eukaryotic translation initiation factor isoform 4E-2 (209 aa).

The disordered stretch occupies residues methionine 1–alanine 29. Low complexity predominate over residues proline 9–alanine 29. MRNA contacts are provided by residues proline 51–glycine 56, lysine 83, and tryptophan 101–glutamate 102. The cysteines at positions 106 and 145 are disulfide-linked. MRNA-binding positions include arginine 152–lysine 157 and arginine 197–lysine 200.

Belongs to the eukaryotic initiation factor 4E family. EIF4F is a multi-subunit complex, the composition of which varies with external and internal environmental conditions. It is composed of at least EIF4A, EIF4E and EIF4G. EIF4E is also known to interact with other partners. In higher plants two isoforms of EIF4F have been identified, named isoform EIF4F and isoform EIF(iso)4F. Isoform EIF4F has subunits p220 and p26, whereas isoform EIF(iso)4F has subunits p82 and p28. In terms of processing, according to the redox status, the Cys-106-Cys-145 disulfide bridge may have a role in regulating protein function by affecting its ability to bind capped mRNA.

The protein localises to the cytoplasm. It localises to the nucleus. Functionally, component of the protein complex eIF4F, which is involved in the recognition of the mRNA cap, ATP-dependent unwinding of 5'-terminal secondary structure and recruitment of mRNA to the ribosome. Recognizes and binds the 7-methylguanosine-containing mRNA cap during an early step in the initiation of protein synthesis and facilitates ribosome binding by inducing the unwinding of the mRNAs secondary structures. This is Eukaryotic translation initiation factor isoform 4E-2 from Triticum aestivum (Wheat).